Here is a 957-residue protein sequence, read N- to C-terminus: Glycine dehydrogenase (decarboxylating) (957 aa).

N6-(pyridoxal phosphate)lysine is present on K702.

It belongs to the GcvP family. As to quaternary structure, the glycine cleavage system is composed of four proteins: P, T, L and H. Pyridoxal 5'-phosphate is required as a cofactor.

It catalyses the reaction N(6)-[(R)-lipoyl]-L-lysyl-[glycine-cleavage complex H protein] + glycine + H(+) = N(6)-[(R)-S(8)-aminomethyldihydrolipoyl]-L-lysyl-[glycine-cleavage complex H protein] + CO2. In terms of biological role, the glycine cleavage system catalyzes the degradation of glycine. The P protein binds the alpha-amino group of glycine through its pyridoxal phosphate cofactor; CO(2) is released and the remaining methylamine moiety is then transferred to the lipoamide cofactor of the H protein. This Bradyrhizobium sp. (strain BTAi1 / ATCC BAA-1182) protein is Glycine dehydrogenase (decarboxylating).